The sequence spans 2048 residues: Fanconi anemia group M protein (2048 aa).

Polar residues predominate over residues 1–37 (MSGRQRTLFQTWGSSISRSSGTPGCSSGTERPQSPGS). Residues 1–45 (MSGRQRTLFQTWGSSISRSSGTPGCSSGTERPQSPGSSKAPLPAA) are disordered. Residue Ser-34 is modified to Phosphoserine. A Helicase ATP-binding domain is found at 98 to 266 (ISRAALFCNT…QVITNLLIGQ (169 aa)). ATP is bound at residue 111 to 118 (LPTGLGKT). The DEAH box motif lies at 214-217 (DEAH). Residues 452–627 (KLEEVVIEHF…VLHFYQRSPR (176 aa)) enclose the Helicase C-terminal domain. The interaction with CENPS/CENPSX stretch occupies residues 661 to 800 (SIFSYRDGMR…TSTFIAPRNE (140 aa)). 3 disordered regions span residues 1433–1476 (NVLN…NFPK), 1518–1540 (LSEEDAEYVSSDENDESENEQDS), and 1668–1809 (ILPD…HTSL). Residues 1518-1538 (LSEEDAEYVSSDENDESENEQ) show a composition bias toward acidic residues. Phosphoserine is present on residues Ser-1673 and Ser-1674. Composition is skewed to polar residues over residues 1703–1745 (HCLN…ISEV), 1753–1767 (HNEVQSTTPPFTTVD), and 1786–1797 (EDSSTSGASCSK). The segment at 1727 to 2048 (LAKQSKQTSL…LNQDRLKSDI (322 aa)) is interaction with FAAP24.

The protein belongs to the DEAD box helicase family. DEAH subfamily. FANCM sub-subfamily. In terms of assembly, component of the Fanconi anemia (FA) core complex, which consists of CENPS, CENPX, FANCA, FANCB, FANCC, FANCE, FANCF, FANCG, FANCL, FANCM, FAAP24 and FAAP100. The FA core complex associates with Bloom syndrome (BLM) complex, which consists of at least BLM, DNA topoisomerase 3-alpha/TOP3A, RMI1/BLAP75, RPA1/RPA70 and RPA2/RPA32. This supercomplex between FA and BLM complexes has been called BRAFT. Forms a discrete complex with CENPS and CENPX, called FANCM-MHF; this interaction stimulates DNA binding and replication fork remodeling by FANCM and stabilizes the binding partners. Forms a heterodimer with FAAP24; this interaction increases FANCM single-stranded DNA-binding activity. Phosphorylated; hyperphosphorylated in response to genotoxic stress. Expressed in germ cells of fetal and adult ovaries. In fetal ovaries, it is present in oogonia but expression is stronger in pachytene stage oocytes. Expressed in oocytes arrested at the diplotene stage of prophase I during the last trimester of pregnancy and in adults. Expressed in the testis.

The protein resides in the nucleus. It carries out the reaction ATP + H2O = ADP + phosphate + H(+). Its function is as follows. DNA-dependent ATPase component of the Fanconi anemia (FA) core complex. Required for the normal activation of the FA pathway, leading to monoubiquitination of the FANCI-FANCD2 complex in response to DNA damage, cellular resistance to DNA cross-linking drugs, and prevention of chromosomal breakage. In complex with CENPS and CENPX, binds double-stranded DNA (dsDNA), fork-structured DNA (fsDNA) and Holliday junction substrates. Its ATP-dependent DNA branch migration activity can process branched DNA structures such as a movable replication fork. This activity is strongly stimulated in the presence of CENPS and CENPX. In complex with FAAP24, efficiently binds to single-strand DNA (ssDNA), splayed-arm DNA, and 3'-flap substrates. In vitro, on its own, strongly binds ssDNA oligomers and weakly fsDNA, but does not bind to dsDNA. This is Fanconi anemia group M protein (FANCM) from Homo sapiens (Human).